The following is a 626-amino-acid chain: ATP-dependent zinc metalloprotease FtsH 3 (626 aa).

Residues 1 to 7 (MNKLFRS) are Cytoplasmic-facing. Residues 8–28 (LAFYMLILVISVAIAVQLGGT) traverse the membrane as a helical segment. Over 29 to 103 (SQQTTQLVYS…LDFRQDNTSG (75 aa)) the chain is Extracellular. The chain crosses the membrane as a helical span at residues 104–124 (IWAMLLQTLVPVVLVLLAFFF). The Cytoplasmic segment spans residues 125 to 626 (IMQQTQGSGN…GGTSQVAPAF (502 aa)). 197-204 (GPPGTGKT) contacts ATP. Zn(2+) is bound at residue histidine 420. Glutamate 421 is a catalytic residue. Residues histidine 424 and aspartate 496 each contribute to the Zn(2+) site. The interval 602-626 (PPRPKPEPLKPRMVGGGTSQVAPAF) is disordered.

The protein in the central section; belongs to the AAA ATPase family. This sequence in the C-terminal section; belongs to the peptidase M41 family. In terms of assembly, homohexamer. Zn(2+) is required as a cofactor.

It is found in the cell membrane. Functionally, acts as a processive, ATP-dependent zinc metallopeptidase for both cytoplasmic and membrane proteins. Plays a role in the quality control of integral membrane proteins. The sequence is that of ATP-dependent zinc metalloprotease FtsH 3 from Symbiobacterium thermophilum (strain DSM 24528 / JCM 14929 / IAM 14863 / T).